The following is a 212-amino-acid chain: Urease accessory protein UreG (212 aa).

19–26 (GPVGSGKT) contributes to the GTP binding site.

It belongs to the SIMIBI class G3E GTPase family. UreG subfamily. Homodimer. UreD, UreF and UreG form a complex that acts as a GTP-hydrolysis-dependent molecular chaperone, activating the urease apoprotein by helping to assemble the nickel containing metallocenter of UreC. The UreE protein probably delivers the nickel.

Its subcellular location is the cytoplasm. Functionally, facilitates the functional incorporation of the urease nickel metallocenter. This process requires GTP hydrolysis, probably effectuated by UreG. The polypeptide is Urease accessory protein UreG (Vibrio parahaemolyticus).